We begin with the raw amino-acid sequence, 305 residues long: Acetaldehyde dehydrogenase (305 aa).

12–15 (SGNI) is a binding site for NAD(+). The Acyl-thioester intermediate role is filled by Cys-127. NAD(+) is bound by residues 158–166 (SAGPGTRAN) and Asn-277.

Belongs to the acetaldehyde dehydrogenase family.

The enzyme catalyses acetaldehyde + NAD(+) + CoA = acetyl-CoA + NADH + H(+). The protein is Acetaldehyde dehydrogenase of Mycolicibacterium paratuberculosis (strain ATCC BAA-968 / K-10) (Mycobacterium paratuberculosis).